A 162-amino-acid chain; its full sequence is Lymphocyte antigen 86 (162 aa).

An N-terminal signal peptide occupies residues 1 to 19 (MNGVAAALLVWILTSPSSS). 3 cysteine pairs are disulfide-bonded: Cys33–Cys58, Cys45–Cys154, and Cys102–Cys112. An N-linked (GlcNAc...) asparagine glycan is attached at Asn96. Asn156 is a glycosylation site (N-linked (GlcNAc...) asparagine).

As to quaternary structure, M-shaped tetramer of two CD180-LY86 heterodimers. As to expression, highly expressed in spleen, liver, brain and thymus, and at lower levels in kidney.

Its subcellular location is the secreted. The protein localises to the extracellular space. May cooperate with CD180 and TLR4 to mediate the innate immune response to bacterial lipopolysaccharide (LPS) and cytokine production. Important for efficient CD180 cell surface expression. The polypeptide is Lymphocyte antigen 86 (Ly86) (Mus musculus (Mouse)).